We begin with the raw amino-acid sequence, 620 residues long: uncharacterized protein (620 aa).

4 helical membrane-spanning segments follow: residues 66-86 (LLNF…NQII), 238-258 (FFDA…NLLW), 546-566 (LGII…VWTI), and 584-604 (IIFI…ILVF).

The protein resides in the cell membrane. This is an uncharacterized protein from Mycoplasma genitalium (strain ATCC 33530 / DSM 19775 / NCTC 10195 / G37) (Mycoplasmoides genitalium).